A 306-amino-acid polypeptide reads, in one-letter code: Pantothenate kinase (306 aa).

ATP is bound at residue 91–98 (GSVAVGKS).

Belongs to the prokaryotic pantothenate kinase family.

The protein resides in the cytoplasm. The enzyme catalyses (R)-pantothenate + ATP = (R)-4'-phosphopantothenate + ADP + H(+). It participates in cofactor biosynthesis; coenzyme A biosynthesis; CoA from (R)-pantothenate: step 1/5. This is Pantothenate kinase from Streptococcus thermophilus (strain CNRZ 1066).